The following is a 679-amino-acid chain: UvrABC system protein C (679 aa).

Positions 65–143 constitute a GIY-YIG domain; it reads NSPGVYRMLN…IKRLRPRFNV (79 aa). The UVR domain maps to 253 to 288; it reads QKVKSHMAEAMNQAAEDLDFERAAIYRDRLAALSHV.

Belongs to the UvrC family. Interacts with UvrB in an incision complex.

It localises to the cytoplasm. The UvrABC repair system catalyzes the recognition and processing of DNA lesions. UvrC both incises the 5' and 3' sides of the lesion. The N-terminal half is responsible for the 3' incision and the C-terminal half is responsible for the 5' incision. The chain is UvrABC system protein C from Rhizobium etli (strain ATCC 51251 / DSM 11541 / JCM 21823 / NBRC 15573 / CFN 42).